We begin with the raw amino-acid sequence, 395 residues long: S-adenosylmethionine synthase (395 aa).

H16 lines the ATP pocket. D18 is a binding site for Mg(2+). E44 contacts K(+). The L-methionine site is built by E57 and Q100. Positions 100 to 110 (QSPDIAQGVDR) are flexible loop. ATP contacts are provided by residues 167–169 (DAK), 233–234 (RF), D242, 248–249 (RK), A265, and K269. An L-methionine-binding site is contributed by D242. K273 serves as a coordination point for L-methionine.

The protein belongs to the AdoMet synthase family. As to quaternary structure, homotetramer; dimer of dimers. Mg(2+) is required as a cofactor. It depends on K(+) as a cofactor.

The protein localises to the cytoplasm. It carries out the reaction L-methionine + ATP + H2O = S-adenosyl-L-methionine + phosphate + diphosphate. Its pathway is amino-acid biosynthesis; S-adenosyl-L-methionine biosynthesis; S-adenosyl-L-methionine from L-methionine: step 1/1. Functionally, catalyzes the formation of S-adenosylmethionine (AdoMet) from methionine and ATP. The overall synthetic reaction is composed of two sequential steps, AdoMet formation and the subsequent tripolyphosphate hydrolysis which occurs prior to release of AdoMet from the enzyme. This chain is S-adenosylmethionine synthase, found in Burkholderia thailandensis (strain ATCC 700388 / DSM 13276 / CCUG 48851 / CIP 106301 / E264).